Here is a 435-residue protein sequence, read N- to C-terminus: 3-phosphoshikimate 1-carboxyvinyltransferase (435 aa).

Residues K23, S24, and R28 each contribute to the 3-phosphoshikimate site. K23 provides a ligand contact to phosphoenolpyruvate. G97 and R125 together coordinate phosphoenolpyruvate. 3-phosphoshikimate contacts are provided by S170, S171, Q172, S198, D314, N338, and K342. Q172 contacts phosphoenolpyruvate. D314 acts as the Proton acceptor in catalysis. Phosphoenolpyruvate is bound by residues R346, R388, and K413.

It belongs to the EPSP synthase family. Monomer.

The protein localises to the cytoplasm. The enzyme catalyses 3-phosphoshikimate + phosphoenolpyruvate = 5-O-(1-carboxyvinyl)-3-phosphoshikimate + phosphate. The protein operates within metabolic intermediate biosynthesis; chorismate biosynthesis; chorismate from D-erythrose 4-phosphate and phosphoenolpyruvate: step 6/7. Functionally, catalyzes the transfer of the enolpyruvyl moiety of phosphoenolpyruvate (PEP) to the 5-hydroxyl of shikimate-3-phosphate (S3P) to produce enolpyruvyl shikimate-3-phosphate and inorganic phosphate. The sequence is that of 3-phosphoshikimate 1-carboxyvinyltransferase from Sodalis glossinidius (strain morsitans).